The sequence spans 457 residues: Adenylosuccinate synthetase isozyme 2 B (457 aa).

Residues 40-46 (GDEGKGK) and 68-70 (GHT) contribute to the GTP site. The Proton acceptor role is filled by aspartate 41. Mg(2+)-binding residues include aspartate 41 and glycine 68. Aspartate 41 is a substrate binding site. Residues 41-44 (DEGK), 66-69 (NAGH), threonine 163, arginine 177, asparagine 256, threonine 271, and arginine 335 each bind IMP. Catalysis depends on histidine 69, which acts as the Proton donor. 331-337 (VTTGRKR) lines the substrate pocket. GTP-binding positions include arginine 337, 363–365 (KLD), and 445–448 (GVGK).

This sequence belongs to the adenylosuccinate synthetase family. As to quaternary structure, homodimer. Mg(2+) serves as cofactor.

It localises to the cytoplasm. Its subcellular location is the mitochondrion. It catalyses the reaction IMP + L-aspartate + GTP = N(6)-(1,2-dicarboxyethyl)-AMP + GDP + phosphate + 2 H(+). It participates in purine metabolism; AMP biosynthesis via de novo pathway; AMP from IMP: step 1/2. Its activity is regulated as follows. Inhibited competitively by AMP and IMP and non-competitively by fructose 1,6-bisphosphate. In terms of biological role, plays an important role in the de novo pathway and in the salvage pathway of purine nucleotide biosynthesis. Catalyzes the first committed step in the biosynthesis of AMP from IMP. This chain is Adenylosuccinate synthetase isozyme 2 B (adss2-b), found in Xenopus tropicalis (Western clawed frog).